We begin with the raw amino-acid sequence, 120 residues long: Large ribosomal subunit protein uL18 (120 aa).

Belongs to the universal ribosomal protein uL18 family. As to quaternary structure, part of the 50S ribosomal subunit; part of the 5S rRNA/L5/L18/L25 subcomplex. Contacts the 5S and 23S rRNAs.

This is one of the proteins that bind and probably mediate the attachment of the 5S RNA into the large ribosomal subunit, where it forms part of the central protuberance. In Methylocella silvestris (strain DSM 15510 / CIP 108128 / LMG 27833 / NCIMB 13906 / BL2), this protein is Large ribosomal subunit protein uL18.